The chain runs to 428 residues: Glutamate-1-semialdehyde 2,1-aminomutase 1 (428 aa).

Lysine 268 carries the post-translational modification N6-(pyridoxal phosphate)lysine.

Belongs to the class-III pyridoxal-phosphate-dependent aminotransferase family. HemL subfamily. Homodimer. Pyridoxal 5'-phosphate is required as a cofactor.

Its subcellular location is the cytoplasm. It carries out the reaction (S)-4-amino-5-oxopentanoate = 5-aminolevulinate. It functions in the pathway porphyrin-containing compound metabolism; protoporphyrin-IX biosynthesis; 5-aminolevulinate from L-glutamyl-tRNA(Glu): step 2/2. The sequence is that of Glutamate-1-semialdehyde 2,1-aminomutase 1 from Geobacillus thermodenitrificans (strain NG80-2).